The chain runs to 394 residues: 1-deoxy-D-xylulose 5-phosphate reductoisomerase (394 aa).

5 residues coordinate NADPH: Thr13, Gly14, Ser15, Ile16, and Asn127. 1-deoxy-D-xylulose 5-phosphate is bound at residue Lys128. Glu129 contributes to the NADPH binding site. Mn(2+) is bound at residue Asp153. 1-deoxy-D-xylulose 5-phosphate contacts are provided by Ser154, Glu155, Ser184, and His207. Glu155 is a Mn(2+) binding site. Gly213 provides a ligand contact to NADPH. 1-deoxy-D-xylulose 5-phosphate is bound by residues Ser220, Asn225, Lys226, and Glu229. A Mn(2+)-binding site is contributed by Glu229.

It belongs to the DXR family. It depends on Mg(2+) as a cofactor. Requires Mn(2+) as cofactor.

It catalyses the reaction 2-C-methyl-D-erythritol 4-phosphate + NADP(+) = 1-deoxy-D-xylulose 5-phosphate + NADPH + H(+). It participates in isoprenoid biosynthesis; isopentenyl diphosphate biosynthesis via DXP pathway; isopentenyl diphosphate from 1-deoxy-D-xylulose 5-phosphate: step 1/6. In terms of biological role, catalyzes the NADPH-dependent rearrangement and reduction of 1-deoxy-D-xylulose-5-phosphate (DXP) to 2-C-methyl-D-erythritol 4-phosphate (MEP). In Ectopseudomonas mendocina (strain ymp) (Pseudomonas mendocina), this protein is 1-deoxy-D-xylulose 5-phosphate reductoisomerase.